The primary structure comprises 2492 residues: Transcriptional regulator ATRX (2492 aa).

Residues M1–R147 form a disordered region. K10 participates in a covalent cross-link: Glycyl lysine isopeptide (Lys-Gly) (interchain with G-Cter in SUMO2). The span at K17–E27 shows a compositional bias: basic and acidic residues. A phosphoserine mark is found at S25 and S34. Over residues M40–M57 the composition is skewed to polar residues. Residues E58–K72 are compositionally biased toward basic and acidic residues. Y89 carries the post-translational modification Phosphotyrosine. Residues S92 and S112 each carry the phosphoserine modification. Residues S92 to S108 are compositionally biased toward acidic residues. The segment covering N135 to R147 has biased composition (basic and acidic residues). Residues K138 and K142 each participate in a glycyl lysine isopeptide (Lys-Gly) (interchain with G-Cter in SUMO2) cross-link. One can recognise an ADD domain in the interval K159–K296. The GATA-type; atypical zinc finger occupies S170–S206. Position 213 is a phosphoserine (S213). The PHD-type; atypical zinc finger occupies D217–P272. Residue K299 forms a Glycyl lysine isopeptide (Lys-Gly) (interchain with G-Cter in SUMO2) linkage. S316 is modified (phosphoserine). Residue K438 forms a Glycyl lysine isopeptide (Lys-Gly) (interchain with G-Cter in SUMO2) linkage. A compositionally biased stretch (basic and acidic residues) spans K445 to P502. 2 disordered regions span residues K445 to D516 and A535 to S576. A compositionally biased stretch (polar residues) spans S550–S567. The short motif at K581–S594 is the PxVxL motif element. The residue at position 591 (T591) is a Phosphothreonine. Residues V593–K616 are disordered. Phosphoserine occurs at positions 594 and 598. A Glycyl lysine isopeptide (Lys-Gly) (interchain with G-Cter in SUMO1); alternate cross-link involves residue K623. A Glycyl lysine isopeptide (Lys-Gly) (interchain with G-Cter in SUMO2); alternate cross-link involves residue K623. The residue at position 634 (S634) is a Phosphoserine. Residues E649–K956 form a disordered region. Residue T674 is modified to Phosphothreonine. 4 positions are modified to phosphoserine: S675, S677, S729, and S731. The span at N755–G777 shows a compositional bias: basic and acidic residues. Residues S784, S819, S849, S850, S875, and S876 each carry the phosphoserine modification. Residues N843–G864 show a composition bias toward basic and acidic residues. Residues D878–T887 are compositionally biased toward basic and acidic residues. S889 carries the post-translational modification Phosphoserine. Basic and acidic residues-rich tracts occupy residues T894 to P909 and G920 to E944. Over residues K945 to K955 the composition is skewed to basic residues. Phosphoserine is present on S962. Position 967 is an N6-acetyllysine (K967). Basic and acidic residues predominate over residues F968 to K1004. A disordered region spans residues F968–K1479. Residue S974 is modified to Phosphoserine. T977 bears the Phosphothreonine mark. A Glycyl lysine isopeptide (Lys-Gly) (interchain with G-Cter in SUMO2) cross-link involves residue K1004. A phosphoserine mark is found at S1011, S1012, and S1013. Positions G1015–H1027 are enriched in basic and acidic residues. Over residues K1045–K1055 the composition is skewed to basic residues. Residues K1056–S1082 are compositionally biased toward basic and acidic residues. S1061 carries the phosphoserine modification. Phosphotyrosine is present on Y1063. The span at E1090 to R1102 shows a compositional bias: basic residues. Positions K1103–N1139 are enriched in basic and acidic residues. Positions K1167–R1195 are enriched in basic residues. The segment at L1189–S1326 is interaction with DAXX. A compositionally biased stretch (polar residues) spans L1233–G1246. A phosphoserine mark is found at S1244, S1245, and S1253. The segment covering P1267–K1281 has biased composition (basic and acidic residues). Positions S1286–E1297 are enriched in acidic residues. Basic and acidic residues predominate over residues E1298–E1308. Phosphoserine occurs at positions 1322, 1324, and 1326. Positions P1334 to L1345 are enriched in basic residues. Phosphoserine is present on residues S1348 and S1352. Composition is skewed to basic and acidic residues over residues G1353 to G1368 and K1408 to R1417. Residues Y1419–I1428 are compositionally biased toward basic residues. Acidic residues predominate over residues E1443–D1468. Residue K1488 forms a Glycyl lysine isopeptide (Lys-Gly) (interchain with G-Cter in SUMO2) linkage. Residue S1527 is modified to Phosphoserine. T1529 is subject to Phosphothreonine. A Helicase ATP-binding domain is found at K1581–N1768. H1594–T1601 is an ATP binding site. The short motif at D1719 to H1722 is the DEGH box element. Phosphoserine is present on residues S1906 and S1913. The segment at S1913–D2000 is disordered. The span at K1929–K1938 shows a compositional bias: basic residues. K1982 is covalently cross-linked (Glycyl lysine isopeptide (Lys-Gly) (interchain with G-Cter in SUMO1); alternate). K1982 is covalently cross-linked (Glycyl lysine isopeptide (Lys-Gly) (interchain with G-Cter in SUMO2); alternate). K1987 is covalently cross-linked (Glycyl lysine isopeptide (Lys-Gly) (interchain with G-Cter in SUMO2)). Residues S1990 to P1999 are compositionally biased toward low complexity. Phosphoserine is present on residues S1992 and S1996. Residues D2010–A2280 are interaction with MECP2. Positions E2025–T2205 constitute a Helicase C-terminal domain. S2220 is modified (phosphoserine). The tract at residues P2462–M2492 is disordered. Residues Q2468 to M2479 are compositionally biased toward pro residues. 2 positions are modified to omega-N-methylarginine: R2474 and R2480.

Belongs to the SNF2/RAD54 helicase family. Interacts with DAXX to form the chromatin remodeling complex ATRX:DAXX. Probably binds EZH2. Binds annexin V in a calcium and phosphatidylcholine/phosphatidylserine-dependent manner. Interacts directly with CBX5 via the PxVxL motif. Interacts with RAD50, MRE11 and NBN; indicative for an association with the MRN complex. Interacts with histone MACROH2A1. Interacts with histone H3 peptides methylated at 'Lys-10' with preferences H3K9me3 &gt; H3K9me2 &gt; H3K9me1. Interacts with histone H3 peptides unmethylated at 'Lys-5' (H3K4me0). Interacts with MECP2, SMC1 and SMC3. Interacts with SETDB1, TRIM28 and ZNF274. In terms of processing, phosphorylated at serine residues during mitose. Phosphorylation may promote the release from the nuclear matrix and progression to mitosis. Ubiquitous.

The protein resides in the nucleus. It is found in the chromosome. Its subcellular location is the telomere. The protein localises to the PML body. It carries out the reaction ATP + H2O = ADP + phosphate + H(+). Its function is as follows. Involved in transcriptional regulation and chromatin remodeling. Facilitates DNA replication in multiple cellular environments and is required for efficient replication of a subset of genomic loci. Binds to DNA tandem repeat sequences in both telomeres and euchromatin and in vitro binds DNA quadruplex structures. May help stabilizing G-rich regions into regular chromatin structures by remodeling G4 DNA and incorporating H3.3-containing nucleosomes. Catalytic component of the chromatin remodeling complex ATRX:DAXX which has ATP-dependent DNA translocase activity and catalyzes the replication-independent deposition of histone H3.3 in pericentric DNA repeats outside S-phase and telomeres, and the in vitro remodeling of H3.3-containing nucleosomes. Its heterochromatin targeting is proposed to involve a combinatorial readout of histone H3 modifications (specifically methylation states of H3K9 and H3K4) and association with CBX5. Involved in maintaining telomere structural integrity in embryonic stem cells which probably implies recruitment of CBX5 to telomeres. Reports on the involvement in transcriptional regulation of telomeric repeat-containing RNA (TERRA) are conflicting; according to a report, it is not sufficient to decrease chromatin condensation at telomeres nor to increase expression of telomeric RNA in fibroblasts. May be involved in telomere maintenance via recombination in ALT (alternative lengthening of telomeres) cell lines. Acts as a negative regulator of chromatin incorporation of transcriptionally repressive histone MACROH2A1, particularily at telomeres and the alpha-globin cluster in erythroleukemic cells. Participates in the allele-specific gene expression at the imprinted IGF2/H19 gene locus. On the maternal allele, required for the chromatin occupancy of SMC1 and CTCTF within the H19 imprinting control region (ICR) and involved in esatblishment of histone tails modifications in the ICR. May be involved in brain development and facial morphogenesis. Binds to zinc-finger coding genes with atypical chromatin signatures and regulates its H3K9me3 levels. Forms a complex with ZNF274, TRIM28 and SETDB1 to facilitate the deposition and maintenance of H3K9me3 at the 3' exons of zinc-finger genes. This Homo sapiens (Human) protein is Transcriptional regulator ATRX (ATRX).